The primary structure comprises 471 residues: Trimethyllysine dioxygenase (471 aa).

Positions 251 and 253 each coordinate Fe cation. Residues 272–302 are disordered; it reads KAAPSRPPPPPPPPPPPSEEKEAAGSAAGEA. Pro residues predominate over residues 276-288; it reads SRPPPPPPPPPPP. A Fe cation-binding site is contributed by H430.

This sequence belongs to the gamma-BBH/TMLD family. Requires Fe(2+) as cofactor. L-ascorbate serves as cofactor.

The protein resides in the cytoplasm. It catalyses the reaction N(6),N(6),N(6)-trimethyl-L-lysine + 2-oxoglutarate + O2 = (3S)-3-hydroxy-N(6),N(6),N(6)-trimethyl-L-lysine + succinate + CO2. It participates in amine and polyamine biosynthesis; carnitine biosynthesis. Converts trimethyllysine (TML) into hydroxytrimethyllysine (HTML). In Neurospora crassa (strain ATCC 24698 / 74-OR23-1A / CBS 708.71 / DSM 1257 / FGSC 987), this protein is Trimethyllysine dioxygenase (cbs-1).